The following is a 209-amino-acid chain: Orotate phosphoribosyltransferase (209 aa).

Residues R96, K100, H102, and 122 to 130 each bind 5-phospho-alpha-D-ribose 1-diphosphate; that span reads EDLISTGGS. An orotate-binding site is contributed by S126.

The protein belongs to the purine/pyrimidine phosphoribosyltransferase family. PyrE subfamily. As to quaternary structure, homodimer. Mg(2+) serves as cofactor.

It carries out the reaction orotidine 5'-phosphate + diphosphate = orotate + 5-phospho-alpha-D-ribose 1-diphosphate. It functions in the pathway pyrimidine metabolism; UMP biosynthesis via de novo pathway; UMP from orotate: step 1/2. In terms of biological role, catalyzes the transfer of a ribosyl phosphate group from 5-phosphoribose 1-diphosphate to orotate, leading to the formation of orotidine monophosphate (OMP). The chain is Orotate phosphoribosyltransferase from Listeria monocytogenes serotype 4b (strain F2365).